The chain runs to 679 residues: UvrABC system protein B (679 aa).

Positions 31 to 414 (ENLTDGLAHQ…ELEKSGTEII (384 aa)) constitute a Helicase ATP-binding domain. An ATP-binding site is contributed by 44 to 51 (GVTGSGKT). The Beta-hairpin motif lies at 97-120 (YYDYYQPEAYVPSSDTFIEKDASI). Residues 436 to 589 (QVDDLLSEAR…QIKYNEEHGI (154 aa)) enclose the Helicase C-terminal domain. Residues 639–674 (QQQIKKLEQQMYKFAQDLEFEKAAAIRDQLHQLREQ) form the UVR domain.

It belongs to the UvrB family. As to quaternary structure, forms a heterotetramer with UvrA during the search for lesions. Interacts with UvrC in an incision complex.

It localises to the cytoplasm. The UvrABC repair system catalyzes the recognition and processing of DNA lesions. A damage recognition complex composed of 2 UvrA and 2 UvrB subunits scans DNA for abnormalities. Upon binding of the UvrA(2)B(2) complex to a putative damaged site, the DNA wraps around one UvrB monomer. DNA wrap is dependent on ATP binding by UvrB and probably causes local melting of the DNA helix, facilitating insertion of UvrB beta-hairpin between the DNA strands. Then UvrB probes one DNA strand for the presence of a lesion. If a lesion is found the UvrA subunits dissociate and the UvrB-DNA preincision complex is formed. This complex is subsequently bound by UvrC and the second UvrB is released. If no lesion is found, the DNA wraps around the other UvrB subunit that will check the other stand for damage. This Haemophilus influenzae (strain 86-028NP) protein is UvrABC system protein B.